The following is a 175-amino-acid chain: RNA pyrophosphohydrolase (175 aa).

Residues 6–149 (GYRPNVGIVI…KRDVYRRVMK (144 aa)) enclose the Nudix hydrolase domain. Positions 38-59 (GGINPGETAEQAMYRELFEEVG) match the Nudix box motif.

It belongs to the Nudix hydrolase family. RppH subfamily. A divalent metal cation is required as a cofactor.

Accelerates the degradation of transcripts by removing pyrophosphate from the 5'-end of triphosphorylated RNA, leading to a more labile monophosphorylated state that can stimulate subsequent ribonuclease cleavage. The protein is RNA pyrophosphohydrolase of Serratia proteamaculans (strain 568).